Reading from the N-terminus, the 378-residue chain is D-alanine--D-alanine ligase (378 aa).

One can recognise an ATP-grasp domain in the interval 157-368 (KVVFESAGLS…YGDLIDELIH (212 aa)). 189–244 (VDKLGFPVFVKPARAGSSMGISKVDSMEGLDAAIDEARRHDLKLVIEAGIVGREIE) is a binding site for ATP. Positions 322, 335, and 337 each coordinate Mg(2+).

Belongs to the D-alanine--D-alanine ligase family. Mg(2+) serves as cofactor. Mn(2+) is required as a cofactor.

It localises to the cytoplasm. It catalyses the reaction 2 D-alanine + ATP = D-alanyl-D-alanine + ADP + phosphate + H(+). It participates in cell wall biogenesis; peptidoglycan biosynthesis. Cell wall formation. In Paenarthrobacter aurescens (strain TC1), this protein is D-alanine--D-alanine ligase.